Reading from the N-terminus, the 248-residue chain is Tetrachloro-P-hydroquinone reductive dehalogenase (248 aa).

The GST N-terminal domain occupies 2–84; it reads PEVSLYNYTM…EAAKLGKVGI (83 aa). Positions 133 to 248 constitute a GST C-terminal domain; sequence YAEKYPELRS…RVMPNWKGGI (116 aa).

Belongs to the GST superfamily. Homodimer.

The catalysed reaction is 2,6-dichlorohydroquinone + glutathione disulfide + chloride + H(+) = 2,3,6-trichlorohydroquinone + 2 glutathione. It carries out the reaction 2,3,6-trichlorohydroquinone + glutathione disulfide + chloride = 2,3,5,6-tetrachlorohydroquinone + 2 glutathione. It participates in xenobiotic degradation; pentachlorophenol degradation. In terms of biological role, sequential reduction of tetrachloro-p-hydroquinone to monochlorophenol, using glutathione as the reducing agent. The polypeptide is Tetrachloro-P-hydroquinone reductive dehalogenase (pcpC) (Sphingobium chlorophenolicum).